The following is an 84-amino-acid chain: UPF0386 protein NGR_c10980 (84 aa).

Belongs to the UPF0386 family.

This Sinorhizobium fredii (strain NBRC 101917 / NGR234) protein is UPF0386 protein NGR_c10980.